Here is a 136-residue protein sequence, read N- to C-terminus: Large ribosomal subunit protein uL16 (136 aa).

It belongs to the universal ribosomal protein uL16 family. In terms of assembly, part of the 50S ribosomal subunit.

Its function is as follows. Binds 23S rRNA and is also seen to make contacts with the A and possibly P site tRNAs. The chain is Large ribosomal subunit protein uL16 from Rickettsia canadensis (strain McKiel).